Reading from the N-terminus, the 309-residue chain is Homoserine kinase (309 aa).

91-101 contributes to the ATP binding site; it reads PIGSGLGSSAC.

It belongs to the GHMP kinase family. Homoserine kinase subfamily.

The protein localises to the cytoplasm. The catalysed reaction is L-homoserine + ATP = O-phospho-L-homoserine + ADP + H(+). It participates in amino-acid biosynthesis; L-threonine biosynthesis; L-threonine from L-aspartate: step 4/5. Catalyzes the ATP-dependent phosphorylation of L-homoserine to L-homoserine phosphate. The polypeptide is Homoserine kinase (Yersinia enterocolitica serotype O:8 / biotype 1B (strain NCTC 13174 / 8081)).